The chain runs to 877 residues: Alanine--tRNA ligase (877 aa).

Residues His-563, His-567, Cys-667, and His-671 each contribute to the Zn(2+) site.

It belongs to the class-II aminoacyl-tRNA synthetase family. Zn(2+) is required as a cofactor.

Its subcellular location is the cytoplasm. It carries out the reaction tRNA(Ala) + L-alanine + ATP = L-alanyl-tRNA(Ala) + AMP + diphosphate. Its function is as follows. Catalyzes the attachment of alanine to tRNA(Ala) in a two-step reaction: alanine is first activated by ATP to form Ala-AMP and then transferred to the acceptor end of tRNA(Ala). Also edits incorrectly charged Ser-tRNA(Ala) and Gly-tRNA(Ala) via its editing domain. This chain is Alanine--tRNA ligase, found in Cytophaga hutchinsonii (strain ATCC 33406 / DSM 1761 / CIP 103989 / NBRC 15051 / NCIMB 9469 / D465).